Reading from the N-terminus, the 511-residue chain is Probable eukaryotic translation initiation factor 4H (511 aa).

2 disordered regions span residues 25–63 (SWAD…DRGS) and 154–511 (TIRV…EVKI). Residues 39–51 (AREESGSGLKRGD) show a composition bias toward basic and acidic residues. Residues 86-162 (FTAFIGNLSF…RTIRVNVAEA (77 aa)) form the RRM domain. Over residues 179–196 (WRRSTPLASRESSSQPSR) the composition is skewed to polar residues. Composition is skewed to basic and acidic residues over residues 230–247 (VRRD…RDPG) and 261–270 (LAEKVDRDVP). Polar residues predominate over residues 285–318 (LADTEQTWSRGTKLRTPTTTSRQSSADSTPSSGA). The segment covering 331–349 (TAGSPSATANATPAAPASG) has biased composition (low complexity). S334 carries the phosphoserine modification. Basic and acidic residues-rich tracts occupy residues 360–388 (AARE…EKQK) and 394–419 (KPVE…DKVA). Residues 420–434 (GKPTTAPATTTNTGA) are compositionally biased toward low complexity. The span at 438–448 (GSADRAKKDEQ) shows a compositional bias: basic and acidic residues. A compositionally biased stretch (polar residues) spans 451–467 (EQVQPSRKSSQTGATSE). The span at 502–511 (VTKGVEEVKI) shows a compositional bias: basic and acidic residues.

Its subcellular location is the cytoplasm. The protein localises to the P-body. Functionally, probable translation initiation factor. In Cryptococcus neoformans var. grubii serotype A (strain H99 / ATCC 208821 / CBS 10515 / FGSC 9487) (Filobasidiella neoformans var. grubii), this protein is Probable eukaryotic translation initiation factor 4H.